Here is a 183-residue protein sequence, read N- to C-terminus: MILLLTNSKIIYPYSEALFSIAKDQEKFEVIKNDMELFVTFTKNLNGFKKFLETPLINKNKKIKVVKDVFSKILNSTTLNFISILINKNRIMFVSNISEKYNQLVLKDKSVKLVKIACARQLSEKQAQALSEVLKHKFKCLSVKLIFNIEPELIAGFKIFIESQVIDVSLQGELKEFEWYLTK.

The protein belongs to the ATPase delta chain family. In terms of assembly, F-type ATPases have 2 components, F(1) - the catalytic core - and F(0) - the membrane proton channel. F(1) has five subunits: alpha(3), beta(3), gamma(1), delta(1), epsilon(1). CF(0) has four main subunits: a(1), b(1), b'(1) and c(10-14). The alpha and beta chains form an alternating ring which encloses part of the gamma chain. F(1) is attached to F(0) by a central stalk formed by the gamma and epsilon chains, while a peripheral stalk is formed by the delta, b and b' chains.

It localises to the plastid. The protein resides in the chloroplast thylakoid membrane. Functionally, f(1)F(0) ATP synthase produces ATP from ADP in the presence of a proton or sodium gradient. F-type ATPases consist of two structural domains, F(1) containing the extramembraneous catalytic core and F(0) containing the membrane proton channel, linked together by a central stalk and a peripheral stalk. During catalysis, ATP synthesis in the catalytic domain of F(1) is coupled via a rotary mechanism of the central stalk subunits to proton translocation. Its function is as follows. This protein is part of the stalk that links CF(0) to CF(1). It either transmits conformational changes from CF(0) to CF(1) or is implicated in proton conduction. The sequence is that of ATP synthase subunit delta, chloroplastic from Cyanidium caldarium (Red alga).